Here is a 155-residue protein sequence, read N- to C-terminus: Small ribosomal subunit protein uS7c (155 aa).

The protein belongs to the universal ribosomal protein uS7 family. In terms of assembly, part of the 30S ribosomal subunit.

It is found in the plastid. The protein localises to the chloroplast. One of the primary rRNA binding proteins, it binds directly to 16S rRNA where it nucleates assembly of the head domain of the 30S subunit. This Lilium superbum (Turk's cap lily) protein is Small ribosomal subunit protein uS7c (rps7).